The primary structure comprises 142 residues: Dromaiocalcin-1 (142 aa).

3 cysteine pairs are disulfide-bonded: C13-C24, C41-C138, and C113-C130. A C-type lectin domain is found at 20 to 139 (FRGNCYGYFR…CGERNAFICK (120 aa)).

The protein resides in the secreted. It localises to the extracellular space. It is found in the extracellular matrix. This chain is Dromaiocalcin-1, found in Dromaius novaehollandiae (Emu).